The primary structure comprises 229 residues: Glutathione S-transferase 1 (229 aa).

The 85-residue stretch at 2–86 folds into the GST N-terminal domain; sequence AQFTLWSHAH…YLADKYDTER (85 aa). In terms of domain architecture, GST C-terminal spans 93–229; that stretch reads DHPEYYKVIQ…FEERSKALDN (137 aa).

The protein belongs to the GST superfamily.

It carries out the reaction RX + glutathione = an S-substituted glutathione + a halide anion + H(+). Involved in the oxidative stress response and detoxification. This Schizosaccharomyces pombe (strain 972 / ATCC 24843) (Fission yeast) protein is Glutathione S-transferase 1 (gst1).